Reading from the N-terminus, the 572-residue chain is Alpha-1D adrenergic receptor (572 aa).

Positions 1–77 (MTFRDLLSVS…SAGEPGSAGA (77 aa)) are disordered. The Extracellular segment spans residues 1-95 (MTFRDLLSVS…AVGGLVVSAQ (95 aa)). Composition is skewed to gly residues over residues 23–33 (SSAGGGGGSAG) and 42–61 (AVGG…GAGS). Asn-65 and Asn-82 each carry an N-linked (GlcNAc...) asparagine glycan. The helical transmembrane segment at 96-121 (GVGVGVFLAAFILMAVAGNLLVILSV) threads the bilayer. Over 122–133 (ACNRHLQTVTNY) the chain is Cytoplasmic. Residues 134–159 (FIVNLAVADLLLSATVLPFSATMEVL) traverse the membrane as a helical segment. The Extracellular segment spans residues 160–169 (GFWAFGRAFC). The helical transmembrane segment at 170 to 192 (DVWAAVDVLCCTASILSLCTISV) threads the bilayer. Residues 193-213 (DRYVGVRHSLKYPAIMTERKA) are Cytoplasmic-facing. A helical transmembrane segment spans residues 214–238 (AAILALLWVVALVVSVGPLLGWKEP). Residues 239–251 (VPPDERFCGITEE) lie on the Extracellular side of the membrane. Residues 252-275 (AGYAVFSSVCSFYLPMAVIVVMYC) form a helical membrane-spanning segment. At 276–348 (RVYVVARSTT…KFSREKKAAK (73 aa)) the chain is on the cytoplasmic side. The chain crosses the membrane as a helical span at residues 349-373 (TLAIVVGVFVLCWFPFFFVLPLGSL). Over 374-380 (FPQLKPS) the chain is Extracellular. Residues 381 to 405 (EGVFKVIFWLGYFNSCVNPLIYPCS) traverse the membrane as a helical segment. At 406–572 (SREFKRAFLR…DYSNLRETDI (167 aa)) the chain is on the cytoplasmic side. Cys-419 carries S-palmitoyl cysteine lipidation. Residues 444–488 (GLRQDCAPSSGDAPPGAPLALTALPDPDPEPPGTPEMQAPVASRR) form a disordered region. The span at 450–468 (APSSGDAPPGAPLALTALP) shows a compositional bias: low complexity.

This sequence belongs to the G-protein coupled receptor 1 family. Adrenergic receptor subfamily. ADRA1D sub-subfamily. Interacts with FLNA (via filamin repeat 21); increases PKA-mediated phosphorylation of FLNA. Palmitoylated. Palmitoylation by ZDHHC21 may increase the expression of the receptor and regulate downstream signaling.

It localises to the cell membrane. In terms of biological role, this alpha-adrenergic receptor mediates its effect through the influx of extracellular calcium. In Homo sapiens (Human), this protein is Alpha-1D adrenergic receptor (ADRA1D).